The chain runs to 93 residues: Islet amyloid polypeptide (93 aa).

Positions methionine 1–alanine 23 are cleaved as a signal peptide. Positions threonine 24–aspartate 35 are excised as a propeptide. A disulfide bridge links cysteine 39 with cysteine 44. Tyrosine 74 carries the post-translational modification Tyrosine amide. The propeptide occupies asparagine 78–leucine 93.

The protein belongs to the calcitonin family. As to quaternary structure, can form homodimers. Interacts with IDE and INS. Interaction with INS inhibits homodimerization and fibril formation. As to expression, abundant in the islets of Langerhans but is not present in the brain or seven other tissues examined.

The protein localises to the secreted. Functionally, amylin/IAPP is a glucoregulatory peptide hormone that plays an important role in the regulation of energy homeostasis. Selectively inhibits insulin-stimulated glucose utilization and glycogen deposition in muscle, while not affecting adipocyte glucose metabolism. IAPP function is mediated by the CALCR-RAMPs (AMYRs) receptor complexes. Amylin can also bind CALCR receptor in the absence of RAMPs, although it is more selective for AMYRs. This Rattus norvegicus (Rat) protein is Islet amyloid polypeptide.